The primary structure comprises 359 residues: Peptide chain release factor 1 (359 aa).

An N5-methylglutamine modification is found at Gln-236.

The protein belongs to the prokaryotic/mitochondrial release factor family. Post-translationally, methylated by PrmC. Methylation increases the termination efficiency of RF1.

Its subcellular location is the cytoplasm. Peptide chain release factor 1 directs the termination of translation in response to the peptide chain termination codons UAG and UAA. This is Peptide chain release factor 1 from Streptococcus agalactiae.